The sequence spans 286 residues: Interferon-induced 35 kDa protein homolog (286 aa).

A leucine-zipper region spans residues 5–26; that stretch reads LQTVLYSLQEEQARLKMRLQEL. NID domains follow at residues 81–170 and 183–266; these read ALVT…GDVE and FADE…GEVE.

This sequence belongs to the NMI family. As to quaternary structure, homodimer. Also interacts with B-ATF. Interacts with TRIM21. Interacts (via NID domains) with NMI (via NID domains); the interaction is direct and is facilitated by TRIM21. Post-translationally, phosphorylated. Dephosphorylation correlates with the formation of a complex with NMI.

It is found in the cytoplasm. It localises to the nucleus. The protein localises to the secreted. Its function is as follows. Acts as a signaling pathway regulator involved in innate immune system response. In response to interferon IFN-alpha, associates in a complex with transcriptional regulator NMI to regulate immune response; the complex formation prevents proteasome-mediated degradation of IFI35 and correlates with IFI35 dephosphorylation. In complex with NMI, inhibits virus-triggered type I interferon/IFN-beta production. In complex with NMI, negatively regulates nuclear factor NF-kappa-B signaling by inhibiting the nuclear translocation, activation and transcription of the NF-kappa-B subunit p65/RELA, resulting in the inhibition of endothelial cell proliferation, migration and re-endothelialization of injured arteries. Beside its role as an intracellular signaling pathway regulator, also functions extracellularly as damage-associated molecular patterns (DAMPs) to promote inflammation when actively released by macrophage to the extracellular space during cell injury and pathogen invasion. Macrophage-secreted IFI35 activates NF-kappa-B signaling in adjacent macrophages through Toll-like receptor 4/TLR4 activation, thereby inducing NF-kappa-B translocation from the cytoplasm into the nucleus which promotes the release of pro-inflammatory cytokines. The chain is Interferon-induced 35 kDa protein homolog from Mus musculus (Mouse).